The following is a 506-amino-acid chain: Glycerol kinase (506 aa).

Residue threonine 14 participates in ADP binding. ATP-binding residues include threonine 14, threonine 15, and serine 16. Position 14 (threonine 14) interacts with sn-glycerol 3-phosphate. An ADP-binding site is contributed by arginine 18. Residues arginine 84, glutamate 85, and tyrosine 136 each coordinate sn-glycerol 3-phosphate. Glycerol-binding residues include arginine 84, glutamate 85, and tyrosine 136. Position 232 is a phosphohistidine; by HPr (histidine 232). Residue aspartate 246 participates in sn-glycerol 3-phosphate binding. The glycerol site is built by aspartate 246 and glutamine 247. ADP-binding residues include threonine 268 and glycine 311. Residues threonine 268, glycine 311, glutamine 315, and glycine 412 each coordinate ATP. ADP contacts are provided by glycine 412 and asparagine 416.

Belongs to the FGGY kinase family. Homotetramer and homodimer (in equilibrium). In terms of processing, the phosphoenolpyruvate-dependent sugar phosphotransferase system (PTS), including enzyme I, and histidine-containing protein (HPr) are required for the phosphorylation of His-232, which leads to the activation of the enzyme.

The catalysed reaction is glycerol + ATP = sn-glycerol 3-phosphate + ADP + H(+). It functions in the pathway polyol metabolism; glycerol degradation via glycerol kinase pathway; sn-glycerol 3-phosphate from glycerol: step 1/1. Its activity is regulated as follows. Activated by phosphorylation and inhibited by fructose 1,6-bisphosphate (FBP). Its function is as follows. Key enzyme in the regulation of glycerol uptake and metabolism. Catalyzes the phosphorylation of glycerol to yield sn-glycerol 3-phosphate. The polypeptide is Glycerol kinase (Enterococcus casseliflavus (Enterococcus flavescens)).